The chain runs to 409 residues: Pentatricopeptide repeat-containing protein At1g01970 (409 aa).

PPR repeat units lie at residues 164 to 198 (NARDYTKIIHYYGKLNQVEDAERTLLSMKNRGFLI), 199 to 233 (DQVTLTAMVQLYSKAGCHKLAEETFNEIKLLGEPL), 234 to 268 (DYRSYGSMIMAYIRAGVPEKGESLLREMDSQEICA), 269 to 303 (GREVYKALLRDYSMGGDAEGAKRVFDAVQIAGITP), 304 to 338 (DVKLCGLLINAYSVSGQSQNARLAFENMRKAGIKA), and 339 to 373 (TDKCVALVLAAYEKEEKLNEALGFLVELEKDSIML).

It belongs to the PPR family. P subfamily.

The chain is Pentatricopeptide repeat-containing protein At1g01970 from Arabidopsis thaliana (Mouse-ear cress).